Consider the following 154-residue polypeptide: Mating pheromone 2 (154 aa).

A signal peptide spans 1–16 (MKAIFIILAILMVTQA). Positions 17 to 52 (FKMTSKVNTKLQSQIQSKFQSKNKLASTFQTSSQLK) are excised as a propeptide.

It localises to the secreted. Mating ciliate pheromones (or gamones) are diffusible extracellular communication signals that distinguish different intraspecific classes of cells commonly referred to as 'mating types'. They prepare the latter for conjugation by changing their cell surface properties. The protein is Mating pheromone 2 of Euplotoides octocarinatus (Freshwater ciliate).